Here is an 850-residue protein sequence, read N- to C-terminus: Ras GTPase-activating protein 2 (850 aa).

Over residues 1–24 the composition is skewed to low complexity; sequence MAAAAPAAAAASSEAPAASATAEP. The disordered stretch occupies residues 1-32; the sequence is MAAAAPAAAAASSEAPAASATAEPEAGDQDSR. A2 carries the post-translational modification N-acetylalanine. C2 domains lie at 20–138 and 149–289; these read ATAE…ETWF and VQGK…QAWY. Residues 372–589 enclose the Ras-GAP domain; it reads DKLVPFATAV…IAVKKFLDEI (218 aa). S555 carries the post-translational modification Phosphoserine. In terms of domain architecture, PH spans 604-706; sequence VHLKEGEMYK…WIDVLCRVSR (103 aa). The segment at 708-744 adopts a Btk-type zinc-finger fold; it reads NQNRLSFYHPSVYLNGNWLCCQETGENTLGCKPCTAG. Zn(2+) is bound by residues H716, C727, C728, and C738. The disordered stretch occupies residues 825 to 850; it reads HEKYRKKRSSSAKYGSKENPIVGKAS.

The protein localises to the cytoplasm. The protein resides in the perinuclear region. Functionally, inhibitory regulator of the Ras-cyclic AMP pathway. Binds inositol tetrakisphosphate (IP4). This Homo sapiens (Human) protein is Ras GTPase-activating protein 2 (RASA2).